A 1015-amino-acid polypeptide reads, in one-letter code: Tolloid-like protein 2 (1015 aa).

The N-terminal stretch at 1 to 25 is a signal peptide; the sequence is MPRATALGALVSLLLLLPLPRGAGG. Disordered stretches follow at residues 24 to 49 and 88 to 130; these read GGLGERPDATADYSELDGEEGTEQQL and VGAT…TTLL. Residues 26–149 constitute a propeptide that is removed on maturation; that stretch reads LGERPDATAD…AKTFSPRVRR (124 aa). Over residues 103–113 the composition is skewed to polar residues; it reads SESSPDTTAMD. Positions 115-125 are enriched in basic and acidic residues; it reads GTKEAGKDGRE. The Peptidase M12A domain maps to 149 to 349; it reads RATTSRTERI…AQARKLYKCP (201 aa). An N-linked (GlcNAc...) asparagine glycan is attached at Asn-171. 4 disulfides stabilise this stretch: Cys-192–Cys-348, Cys-212–Cys-234, Cys-214–Cys-215, and Cys-351–Cys-377. His-242 contributes to the Zn(2+) binding site. The active site involves Glu-243. Positions 246 and 252 each coordinate Zn(2+). 2 consecutive CUB domains span residues 351-463 and 464-576; these read CGET…YEAT and CGGD…FFKE. Asn-361 and Asn-392 each carry an N-linked (GlcNAc...) asparagine glycan. 12 cysteine pairs are disulfide-bonded: Cys-404–Cys-426, Cys-464–Cys-490, Cys-517–Cys-539, Cys-580–Cys-592, Cys-588–Cys-601, Cys-603–Cys-616, Cys-620–Cys-646, Cys-673–Cys-695, Cys-736–Cys-747, Cys-743–Cys-756, Cys-758–Cys-771, and Cys-776–Cys-802. Residues 576 to 617 form the EGF-like 1; calcium-binding domain; sequence EVDECSWPDHGGCEHRCVNTLGSYKCACDPGYELAADKKMCE. The CUB 3 domain maps to 620–732; it reads CGGFITKLNG…RGFRAHFFSD (113 aa). Asn-628 carries an N-linked (GlcNAc...) asparagine glycan. An EGF-like 2; calcium-binding domain is found at 732 to 772; it reads DKDECAKDNGGCQHECVNTFGSYLCRCRNGYWLHENGHDCK. 2 CUB domains span residues 776–888 and 889–1005; these read CAHK…HSTE and CGGR…YTST. A glycan (N-linked (GlcNAc...) asparagine) is linked at Asn-805. 3 disulfide bridges follow: Cys-829–Cys-851, Cys-889–Cys-919, and Cys-946–Cys-968. 2 positions are modified to omega-N-methylarginine: Arg-963 and Arg-966.

Requires Zn(2+) as cofactor.

The protein resides in the secreted. Functionally, protease which specifically processes pro-lysyl oxidase. Required for the embryonic development. Predominant protease, which in the development, influences dorsal-ventral patterning and skeletogenesis. In Homo sapiens (Human), this protein is Tolloid-like protein 2 (TLL2).